The chain runs to 307 residues: Probable GTP 3',8-cyclase (307 aa).

The Radical SAM core domain maps to 5–227; sequence AYGRRISSLR…RRTKYYLGGA (223 aa). R14 serves as a coordination point for GTP. [4Fe-4S] cluster is bound by residues C21 and C25. Y27 provides a ligand contact to S-adenosyl-L-methionine. A [4Fe-4S] cluster-binding site is contributed by C28. K61 lines the GTP pocket. An S-adenosyl-L-methionine-binding site is contributed by G65. T89 serves as a coordination point for GTP. Position 113 (S113) interacts with S-adenosyl-L-methionine. K151 contributes to the GTP binding site. C241 and C244 together coordinate [4Fe-4S] cluster. A GTP-binding site is contributed by 246–248; it reads RLR. Residue C258 coordinates [4Fe-4S] cluster.

This sequence belongs to the radical SAM superfamily. MoaA family. Requires [4Fe-4S] cluster as cofactor.

It carries out the reaction GTP + AH2 + S-adenosyl-L-methionine = (8S)-3',8-cyclo-7,8-dihydroguanosine 5'-triphosphate + 5'-deoxyadenosine + L-methionine + A + H(+). The protein operates within cofactor biosynthesis; molybdopterin biosynthesis. Catalyzes the cyclization of GTP to (8S)-3',8-cyclo-7,8-dihydroguanosine 5'-triphosphate. The sequence is that of Probable GTP 3',8-cyclase from Methanocella arvoryzae (strain DSM 22066 / NBRC 105507 / MRE50).